Reading from the N-terminus, the 190-residue chain is uncharacterized protein (190 aa).

It belongs to the Iojap/RsfS family.

This is an uncharacterized protein from Caenorhabditis elegans.